We begin with the raw amino-acid sequence, 350 residues long: Ion-translocating oxidoreductase complex subunit D (350 aa).

3 consecutive transmembrane segments (helical) span residues 25 to 45, 89 to 109, and 124 to 144; these read ALCL…GSLI, IPPL…IIIV, and AMAG…SWVA. FMN phosphoryl threonine is present on Thr-185. A run of 5 helical transmembrane segments spans residues 212-232, 239-259, 265-285, 298-318, and 319-339; these read SYGV…LVLL, WHIS…GFLI, VSPL…FIAT, LIFG…GGYP, and DAVA…DHYV.

This sequence belongs to the NqrB/RnfD family. As to quaternary structure, the complex is composed of six subunits: RnfA, RnfB, RnfC, RnfD, RnfE and RnfG. Requires FMN as cofactor.

The protein resides in the cell inner membrane. Part of a membrane-bound complex that couples electron transfer with translocation of ions across the membrane. This chain is Ion-translocating oxidoreductase complex subunit D, found in Shewanella denitrificans (strain OS217 / ATCC BAA-1090 / DSM 15013).